A 637-amino-acid chain; its full sequence is tRNA uridine 5-carboxymethylaminomethyl modification enzyme MnmG (637 aa).

An FAD-binding site is contributed by 18–23 (GAGHAG). 281-295 (GPRYCPSIEDKIVRF) is an NAD(+) binding site.

The protein belongs to the MnmG family. As to quaternary structure, homodimer. Heterotetramer of two MnmE and two MnmG subunits. FAD serves as cofactor.

The protein localises to the cytoplasm. Its function is as follows. NAD-binding protein involved in the addition of a carboxymethylaminomethyl (cmnm) group at the wobble position (U34) of certain tRNAs, forming tRNA-cmnm(5)s(2)U34. The chain is tRNA uridine 5-carboxymethylaminomethyl modification enzyme MnmG from Ligilactobacillus salivarius (strain UCC118) (Lactobacillus salivarius).